Reading from the N-terminus, the 294-residue chain is Acetylglutamate kinase (294 aa).

Substrate-binding positions include 66-67 (GG), arginine 88, and asparagine 193.

Belongs to the acetylglutamate kinase family. ArgB subfamily.

The protein localises to the cytoplasm. The enzyme catalyses N-acetyl-L-glutamate + ATP = N-acetyl-L-glutamyl 5-phosphate + ADP. The protein operates within amino-acid biosynthesis; L-arginine biosynthesis; N(2)-acetyl-L-ornithine from L-glutamate: step 2/4. Its function is as follows. Catalyzes the ATP-dependent phosphorylation of N-acetyl-L-glutamate. This chain is Acetylglutamate kinase, found in Agrobacterium fabrum (strain C58 / ATCC 33970) (Agrobacterium tumefaciens (strain C58)).